We begin with the raw amino-acid sequence, 209 residues long: Glycine cleavage system H-like protein gcvH4 (209 aa).

Positions Asn-35–Asn-51 are enriched in low complexity. The interval Asn-35–Leu-56 is disordered. The Lipoyl-binding domain maps to Phe-73–Lys-159.

It belongs to the GcvH family.

The polypeptide is Glycine cleavage system H-like protein gcvH4 (gcvH4) (Dictyostelium discoideum (Social amoeba)).